The following is a 340-amino-acid chain: Coproporphyrin III ferrochelatase (340 aa).

Fe-coproporphyrin III-binding residues include Ser52 and Tyr121. The Fe(2+) site is built by His181 and Glu264.

The protein belongs to the ferrochelatase family.

The protein localises to the cytoplasm. The catalysed reaction is Fe-coproporphyrin III + 2 H(+) = coproporphyrin III + Fe(2+). It functions in the pathway porphyrin-containing compound metabolism; protoheme biosynthesis. Functionally, involved in coproporphyrin-dependent heme b biosynthesis. Catalyzes the insertion of ferrous iron into coproporphyrin III to form Fe-coproporphyrin III. The polypeptide is Coproporphyrin III ferrochelatase (Mycolicibacterium smegmatis (strain ATCC 700084 / mc(2)155) (Mycobacterium smegmatis)).